The sequence spans 196 residues: Probable GTP-binding protein EngB (196 aa).

The region spanning 21–195 (DVSEICLIGR…YELIDKLLGS (175 aa)) is the EngB-type G domain. GTP contacts are provided by residues 29–36 (GRSNVGKS), 56–60 (GKTRL), 75–78 (DAPG), 142–145 (TKLD), and 174–176 (ISN). 2 residues coordinate Mg(2+): Ser-36 and Thr-58.

Belongs to the TRAFAC class TrmE-Era-EngA-EngB-Septin-like GTPase superfamily. EngB GTPase family. Requires Mg(2+) as cofactor.

Necessary for normal cell division and for the maintenance of normal septation. In Mycoplasma mycoides subsp. mycoides SC (strain CCUG 32753 / NCTC 10114 / PG1), this protein is Probable GTP-binding protein EngB.